The chain runs to 250 residues: Probable ABC transporter permease protein BAB2_1148 (250 aa).

The next 6 membrane-spanning stretches (helical) occupy residues 12–32, 63–83, 94–114, 122–142, 172–192, and 211–231; these read LLSF…GAVV, VLSG…LMGW, WVQF…IVTL, IFVI…QGVI, VPFI…TVVA, and LYYD…LGLF. Residues 56 to 236 enclose the ABC transmembrane type-1 domain; sequence IFASLRRVLS…ILGLFMDRLL (181 aa).

Belongs to the binding-protein-dependent transport system permease family. In terms of assembly, the complex is composed of two ATP-binding proteins (BAB2_1147), two transmembrane proteins (BAB2_1148) and a solute-binding protein (BAB2_1146).

The protein localises to the cell inner membrane. Functionally, probably part of an ABC transporter complex. Probably responsible for the translocation of the substrate across the membrane. This chain is Probable ABC transporter permease protein BAB2_1148, found in Brucella abortus (strain 2308).